Reading from the N-terminus, the 327-residue chain is NADPH-dependent aldose reductase GRE3 (327 aa).

Catalysis depends on Tyr49, which acts as the Proton donor. Residue His111 coordinates substrate. 219 to 286 (SSFGPQSFIE…SSKKERLLGN (68 aa)) provides a ligand contact to NADP(+).

Belongs to the aldo/keto reductase family. As to quaternary structure, monomer.

Its subcellular location is the cytoplasm. The protein localises to the nucleus. The catalysed reaction is an alditol + NAD(+) = an aldose + NADH + H(+). It carries out the reaction an alditol + NADP(+) = an aldose + NADPH + H(+). Functionally, aldose reductase with a broad substrate specificity. Reduces the cytotoxic compound methylglyoxal (MG) to acetol and (R)-lactaldehyde under stress conditions. MG is synthesized via a bypath of glycolysis from dihydroxyacetone phosphate and is believed to play a role in cell cycle regulation and stress adaptation. In pentose-fermenting yeasts, aldose reductase catalyzes the reduction of xylose into xylitol. The purified enzyme catalyzes this reaction, but the inability of S.cerevisiae to grow on xylose as sole carbon source indicates that the physiological function is more likely methylglyoxal reduction. The sequence is that of NADPH-dependent aldose reductase GRE3 from Saccharomyces cerevisiae (strain ATCC 204508 / S288c) (Baker's yeast).